Here is a 552-residue protein sequence, read N- to C-terminus: Alcohol dehydrogenase [acceptor] (552 aa).

FAD is bound at residue Asp3–Glu32. His469 acts as the Proton acceptor in catalysis.

The protein belongs to the GMC oxidoreductase family. Requires FAD as cofactor.

The protein localises to the cell inner membrane. The catalysed reaction is a primary alcohol + A = an aldehyde + AH2. Functionally, converts aliphatic medium-chain-length alcohols into aldehydes. May be linked to the electron transfer chain. In Pseudomonas putida (Arthrobacter siderocapsulatus), this protein is Alcohol dehydrogenase [acceptor] (alkJ).